A 1038-amino-acid polypeptide reads, in one-letter code: GTPase-activating Rap/Ran-GAP domain-like protein 3 (1038 aa).

A phosphoserine mark is found at Lys-6 and Ser-68. Residues 214-430 (LLVLEEQEGS…RTLDMLIRSL (217 aa)) form the Rap-GAP domain. A phosphoserine mark is found at Ser-449 and Ser-455. The 313-residue stretch at 512–824 (PHEAVCADPW…QLVASRSDIY (313 aa)) folds into the CNH domain. Disordered stretches follow at residues 833–863 (EGSS…FPSS) and 937–1038 (LLGL…IDLK). At Thr-851 the chain carries Phosphothreonine. Over residues 1019 to 1028 (SGSSPFQLMA) the composition is skewed to polar residues.

The protein belongs to the GARNL3 family.

In Mus musculus (Mouse), this protein is GTPase-activating Rap/Ran-GAP domain-like protein 3 (Garnl3).